A 521-amino-acid chain; its full sequence is MFS siderochrome iron transporter 1 (521 aa).

The segment covering 1–10 (MDKTASLTSQ) has biased composition (polar residues). The tract at residues 1–29 (MDKTASLTSQDAEKHDPDALRKERATDPP) is disordered. The segment covering 11 to 29 (DAEKHDPDALRKERATDPP) has biased composition (basic and acidic residues). The next 5 helical transmembrane spans lie at 62–82 (WGLF…PLMG), 99–119 (FLSL…AFGC), 126–146 (WSFN…GGTQ), 148–168 (FVAL…NMPV), and 187–207 (ILSI…WPLI). A glycan (N-linked (GlcNAc...) asparagine) is linked at N209. Transmembrane regions (helical) follow at residues 229–249 (YLLF…FFVF), 330–350 (LAWS…ASTL), 379–399 (VIIA…VEQP), 404–424 (KGTL…TTTA), 431–451 (LGWN…LYAI), and 466–486 (GLTA…ALYA). The N-linked (GlcNAc...) asparagine glycan is linked to N487. A helical transmembrane segment spans residues 491-511 (AVPVYVSGALIIASGAMALLL).

This sequence belongs to the major facilitator superfamily.

Its subcellular location is the membrane. In terms of biological role, major facilitator transporter probably involved in siderophore basidioferrin transmembrane transport. The polypeptide is MFS siderochrome iron transporter 1 (Ceriporiopsis subvermispora (strain B) (White-rot fungus)).